We begin with the raw amino-acid sequence, 170 residues long: Adenine phosphoribosyltransferase (170 aa).

It belongs to the purine/pyrimidine phosphoribosyltransferase family. As to quaternary structure, homodimer.

The protein resides in the cytoplasm. The enzyme catalyses AMP + diphosphate = 5-phospho-alpha-D-ribose 1-diphosphate + adenine. The protein operates within purine metabolism; AMP biosynthesis via salvage pathway; AMP from adenine: step 1/1. Its function is as follows. Catalyzes a salvage reaction resulting in the formation of AMP, that is energically less costly than de novo synthesis. In Halothermothrix orenii (strain H 168 / OCM 544 / DSM 9562), this protein is Adenine phosphoribosyltransferase.